The following is an 881-amino-acid chain: Tyrosine-protein kinase receptor TYRO3 (881 aa).

The signal sequence occupies residues 1–28; the sequence is MVNPGPPGLIAGLLLAALSLSSVDGTKA. 2 Ig-like C2-type domains span residues 29–114 and 125–206; these read LGFV…KSVS and PYFT…AIVE. At 29 to 414 the chain is on the extracellular side; that stretch reads LGFVGHGYNM…QRHPHTRMSW (386 aa). 2 N-linked (GlcNAc...) asparagine glycosylation sites follow: N37 and N49. A disulfide bridge connects residues C50 and C103. N143 carries N-linked (GlcNAc...) asparagine glycosylation. Residues C146 and C189 are joined by a disulfide bond. Fibronectin type-III domains lie at 213-306 and 311-401; these read PPFN…TKEK and IPQN…SKEE. N-linked (GlcNAc...) asparagine glycosylation is found at N216, N279, N351, and N365. The helical transmembrane segment at 415-435 threads the bilayer; the sequence is VPMVLGILTALVTVVAMTLIF. Over 436–881 the chain is Cytoplasmic; the sequence is LRKGRKETRF…MQEEQVVITL (446 aa). The Protein kinase domain occupies 503-774; that stretch reads FTLGRTLGKG…VDLKRRLEAI (272 aa). Residues 509–517 and K535 each bind ATP; that span reads LGKGEFGSV. D640 (proton acceptor) is an active-site residue. At Y671 the chain carries Phosphotyrosine; by autocatalysis. A disordered region spans residues 846–881; that stretch reads EWSSSAQNGEARGLLHEEEEEEEEEEMQEEQVVITL. Residues 862–874 show a composition bias toward acidic residues; sequence EEEEEEEEEEMQE.

This sequence belongs to the protein kinase superfamily. Tyr protein kinase family. AXL/UFO subfamily. Post-translationally, tyrosine phosphorylated upon receptor stimulation.

The protein resides in the cell membrane. It carries out the reaction L-tyrosyl-[protein] + ATP = O-phospho-L-tyrosyl-[protein] + ADP + H(+). Functionally, may be involved in cell adhesion processes, particularly in the central nervous system. This chain is Tyrosine-protein kinase receptor TYRO3 (tyro3), found in Xenopus tropicalis (Western clawed frog).